Consider the following 372-residue polypeptide: N-methyl-L-tryptophan oxidase (372 aa).

4-34 lines the FAD pocket; it reads DLIIIGSGSVGAAAGYYATRAGLNVLMTDAH. At C308 the chain carries S-8alpha-FAD cysteine.

It belongs to the MSOX/MTOX family. MTOX subfamily. Monomer. FAD serves as cofactor.

The enzyme catalyses N(alpha)-methyl-L-tryptophan + O2 + H2O = L-tryptophan + formaldehyde + H2O2. Functionally, catalyzes the oxidative demethylation of N-methyl-L-tryptophan. This Escherichia coli (strain K12 / DH10B) protein is N-methyl-L-tryptophan oxidase.